Reading from the N-terminus, the 206-residue chain is High frequency lysogenization protein HflD homolog (206 aa).

The protein belongs to the HflD family.

The protein localises to the cytoplasm. Its subcellular location is the cell inner membrane. The polypeptide is High frequency lysogenization protein HflD homolog (Ectopseudomonas mendocina (strain ymp) (Pseudomonas mendocina)).